We begin with the raw amino-acid sequence, 20 residues long: AXFQKIKVANPVVELDGDEM.

Belongs to the isocitrate and isopropylmalate dehydrogenases family. The cofactor is Mn(2+). Requires Mg(2+) as cofactor.

The protein localises to the cytoplasm. The enzyme catalyses D-threo-isocitrate + NADP(+) = 2-oxoglutarate + CO2 + NADPH. The chain is Isocitrate dehydrogenase [NADP] from Naegleria fowleri (Brain eating amoeba).